A 746-amino-acid chain; its full sequence is Rhizobactin receptor (746 aa).

An N-terminal signal peptide occupies residues Met1–Ala26. Residues Glu40–Gly47 carry the TonB box motif. One can recognise a TBDR plug domain in the interval Gln52–Lys163. Residues Glu169–Phe746 form the TBDR beta-barrel domain. The short motif at Phe729–Phe746 is the TonB C-terminal box element.

The protein belongs to the TonB-dependent receptor family.

Its subcellular location is the cell outer membrane. In terms of biological role, receptor for the siderophore rhizobactin. The protein is Rhizobactin receptor (rhtA) of Rhizobium meliloti (strain 1021) (Ensifer meliloti).